The sequence spans 424 residues: Imidazolonepropionase (424 aa).

2 residues coordinate Fe(3+): His84 and His86. 2 residues coordinate Zn(2+): His84 and His86. 3 residues coordinate 4-imidazolone-5-propanoate: Arg93, Tyr156, and His189. Tyr156 contacts N-formimidoyl-L-glutamate. Residue His254 participates in Fe(3+) binding. A Zn(2+)-binding site is contributed by His254. Glu257 serves as a coordination point for 4-imidazolone-5-propanoate. Asp328 contributes to the Fe(3+) binding site. Position 328 (Asp328) interacts with Zn(2+). The N-formimidoyl-L-glutamate site is built by Asn330 and Gly332. Residue Ser333 coordinates 4-imidazolone-5-propanoate.

It belongs to the metallo-dependent hydrolases superfamily. HutI family. It depends on Zn(2+) as a cofactor. Fe(3+) is required as a cofactor.

It localises to the cytoplasm. It carries out the reaction 4-imidazolone-5-propanoate + H2O = N-formimidoyl-L-glutamate. It participates in amino-acid degradation; L-histidine degradation into L-glutamate; N-formimidoyl-L-glutamate from L-histidine: step 3/3. Catalyzes the hydrolytic cleavage of the carbon-nitrogen bond in imidazolone-5-propanoate to yield N-formimidoyl-L-glutamate. It is the third step in the universal histidine degradation pathway. The protein is Imidazolonepropionase of Geobacillus sp. (strain WCH70).